The chain runs to 744 residues: MSGPEDPADRRHGEVPAPRRDIPRPLVERRDLMLLAAGTHRDPHTVLGAHPHPDGTVVRVLRPHAAKVSVRVGGVDHPLDSVGYGVFAAVLPHPELMDYRIVTEYPGGPTVIAADGFRFLPTLGELDLHLIGEGRHEHLWHVLGAHPRRYTTLDGPVSGTSFAVWAPNARGVTVIGDFDGWSGNTAPMRALGTSGVWEVFVPDVGSGTKYKYRVHGADGRVVDHADPLAFATELPPATASVVTGSDYTWQDAQWLERRRSTDPTRSPMSVYEVHLGSWRPGLGYRELAEQLADYVRAAGYTHVELLPVAEHPFGGSWGYQVTSYYAPTARFGSPDDFRAFVDHLHGAGIGVLLDWVPAHFPRDEWALARFDGTPLYEHPDPRRGEQLDWGTYVFDFGRNEVRNFLVANARFWIEEFHIDGLRVDAVASMLYLDYSRGENWEPNIHGGRENLEAVAFLRELNDVVHRAHPGVVTIAEESTTWPGVTRGTEVGGLGFTMKWNMGWMHDTLGFLARDPIHRSWHHNEITFSLVYAWSENYVLPISHDEVVHGKGTLWTRMPGDDFAKAAGVRALLAYMWAHPGKQLLFMGQDFGQFREWSHDRGLDWGELDNPLHRGIATAVRDLNRVYRATPALWSQDTTPGGYAWIEADDRDRNVLAFLRYGSDGSTVACVFNFSGALHGEYRVGLPIAGEWTEILNTDAADYGGSGVGNYGVVRTEEIPWHGRPVSATVALAPNSAVWLAAPRA.

Residues M1–P23 are disordered. Residues P7 to P23 are compositionally biased toward basic and acidic residues. The active-site Nucleophile is the D424. E476 serves as the catalytic Proton donor.

It belongs to the glycosyl hydrolase 13 family. GlgB subfamily. As to quaternary structure, monomer.

The enzyme catalyses Transfers a segment of a (1-&gt;4)-alpha-D-glucan chain to a primary hydroxy group in a similar glucan chain.. It functions in the pathway glycan biosynthesis; glycogen biosynthesis. Catalyzes the formation of the alpha-1,6-glucosidic linkages in glycogen by scission of a 1,4-alpha-linked oligosaccharide from growing alpha-1,4-glucan chains and the subsequent attachment of the oligosaccharide to the alpha-1,6 position. This chain is 1,4-alpha-glucan branching enzyme GlgB, found in Nocardia farcinica (strain IFM 10152).